The following is a 137-amino-acid chain: Phosphomevalonate dehydratase small subunit (137 aa).

The Proton acceptor role is filled by serine 62.

It belongs to the AcnX type II small subunit family. As to quaternary structure, heterodimer composed of a large subunit (PMDh-L) and a small subunit (PMDh-S).

The catalysed reaction is (R)-5-phosphomevalonate = (2E)-3-methyl-5-phosphooxypent-2-enoate + H2O. It participates in isoprenoid biosynthesis; isopentenyl diphosphate biosynthesis via mevalonate pathway. Its function is as follows. Component of a hydro-lyase that catalyzes the dehydration of mevalonate 5-phosphate (MVA5P) to form trans-anhydromevalonate 5-phosphate (tAHMP). Involved in the archaeal mevalonate (MVA) pathway, which provides fundamental precursors for isoprenoid biosynthesis, such as isopentenyl diphosphate (IPP) and dimethylallyl diphosphate (DMAPP). The polypeptide is Phosphomevalonate dehydratase small subunit (Methanothrix thermoacetophila (strain DSM 6194 / JCM 14653 / NBRC 101360 / PT) (Methanosaeta thermophila)).